The sequence spans 419 residues: Gamma-glutamyl phosphate reductase (419 aa).

It belongs to the gamma-glutamyl phosphate reductase family.

The protein resides in the cytoplasm. The enzyme catalyses L-glutamate 5-semialdehyde + phosphate + NADP(+) = L-glutamyl 5-phosphate + NADPH + H(+). It participates in amino-acid biosynthesis; L-proline biosynthesis; L-glutamate 5-semialdehyde from L-glutamate: step 2/2. Its function is as follows. Catalyzes the NADPH-dependent reduction of L-glutamate 5-phosphate into L-glutamate 5-semialdehyde and phosphate. The product spontaneously undergoes cyclization to form 1-pyrroline-5-carboxylate. The chain is Gamma-glutamyl phosphate reductase from Caldicellulosiruptor bescii (strain ATCC BAA-1888 / DSM 6725 / KCTC 15123 / Z-1320) (Anaerocellum thermophilum).